The chain runs to 363 residues: 3-dehydroquinate synthase (363 aa).

NAD(+) is bound by residues 71–76 (DGEQYK), 105–109 (GVIGD), 129–130 (TT), Lys-142, Lys-151, and 169–172 (CLKT). Residues Glu-184, His-247, and His-264 each coordinate Zn(2+).

This sequence belongs to the sugar phosphate cyclases superfamily. Dehydroquinate synthase family. The cofactor is NAD(+). Co(2+) is required as a cofactor. Zn(2+) serves as cofactor.

It is found in the cytoplasm. It catalyses the reaction 7-phospho-2-dehydro-3-deoxy-D-arabino-heptonate = 3-dehydroquinate + phosphate. It participates in metabolic intermediate biosynthesis; chorismate biosynthesis; chorismate from D-erythrose 4-phosphate and phosphoenolpyruvate: step 2/7. Its function is as follows. Catalyzes the conversion of 3-deoxy-D-arabino-heptulosonate 7-phosphate (DAHP) to dehydroquinate (DHQ). In Vibrio vulnificus (strain CMCP6), this protein is 3-dehydroquinate synthase.